Consider the following 140-residue polypeptide: ATP synthase epsilon chain 1 (140 aa).

It belongs to the ATPase epsilon chain family. In terms of assembly, F-type ATPases have 2 components, CF(1) - the catalytic core - and CF(0) - the membrane proton channel. CF(1) has five subunits: alpha(3), beta(3), gamma(1), delta(1), epsilon(1). CF(0) has three main subunits: a, b and c.

The protein resides in the cell inner membrane. Functionally, produces ATP from ADP in the presence of a proton gradient across the membrane. The chain is ATP synthase epsilon chain 1 from Methylococcus capsulatus (strain ATCC 33009 / NCIMB 11132 / Bath).